Reading from the N-terminus, the 508-residue chain is DNA polymerase II small subunit (508 aa).

The segment covering Ala-66–Pro-80 has biased composition (low complexity). Residues Ala-66 to Thr-122 form a disordered region. Positions His-86 to Pro-95 are enriched in polar residues.

This sequence belongs to the DNA polymerase delta/II small subunit family. In terms of assembly, heterodimer of a large subunit and a small subunit.

The enzyme catalyses DNA(n) + a 2'-deoxyribonucleoside 5'-triphosphate = DNA(n+1) + diphosphate. The catalysed reaction is Exonucleolytic cleavage in the 3'- to 5'-direction to yield nucleoside 5'-phosphates.. Functionally, possesses two activities: a DNA synthesis (polymerase) and an exonucleolytic activity that degrades single-stranded DNA in the 3' to 5' direction. Has a template-primer preference which is characteristic of a replicative DNA polymerase. This chain is DNA polymerase II small subunit, found in Halobacterium salinarum (strain ATCC 29341 / DSM 671 / R1).